A 310-amino-acid polypeptide reads, in one-letter code: Nucleotide-binding protein BLA_1368 (310 aa).

Residues 1–21 (MQSARNEQRGTGPESPHAASP) form a disordered region. 32-39 (GMSGAGRS) contributes to the ATP binding site. 83–86 (DVRS) contacts GTP.

This sequence belongs to the RapZ-like family.

Displays ATPase and GTPase activities. This is Nucleotide-binding protein BLA_1368 from Bifidobacterium animalis subsp. lactis (strain AD011).